We begin with the raw amino-acid sequence, 247 residues long: Neurotrophic factor BDNF precursor form (247 aa).

Residues 1–18 form the signal peptide; that stretch reads MTILFLTMVISYFGCMKA. The propeptide occupies 19-128; it reads APMKEANVRG…AANMSVRVRR (110 aa). The N-linked (GlcNAc...) asparagine glycan is linked to N121. Disulfide bonds link C141/C208, C186/C237, and C196/C239.

Belongs to the NGF-beta family. Monomers and homodimers. Binds to NTRK2/TRKB. Can form heterodimers with other neurotrophin family members, such as NTF3 and NTF4 (in vitro), but the physiological relevance of this is not clear. BDNF precursor form: interacts with the heterodimer formed by NGFR and SORCS2. Mature BDNF has much lower affinity for the heterodimer formed by NGFR and SORCS2. In terms of processing, N-glycosylated and glycosulfated, contrary to mature BDNF. Mature BDNF is produced by proteolytic removal of the propeptide, catalyzed by a FURIN family member. In addition, the precursor form is proteolytically cleaved within the propeptide, but this is not an obligatory intermediate for the production of mature BDNF. Can be converted into mature BDNF by plasmin (PLG).

The protein resides in the secreted. Important signaling molecule that activates signaling cascades downstream of NTRK2. During development, promotes the survival and differentiation of selected neuronal populations of the peripheral and central nervous systems. Participates in axonal growth, pathfinding and in the modulation of dendritic growth and morphology. Major regulator of synaptic transmission and plasticity at adult synapses in many regions of the CNS. The versatility of BDNF is emphasized by its contribution to a range of adaptive neuronal responses including long-term potentiation (LTP), long-term depression (LTD), certain forms of short-term synaptic plasticity, as well as homeostatic regulation of intrinsic neuronal excitability. Functionally, important signaling molecule that activates signaling cascades downstream of NTRK2. Activates signaling cascades via the heterodimeric receptor formed by NGFR and SORCS2. Signaling via NGFR and SORCS2 plays a role in synaptic plasticity and long-term depression (LTD). Binding to NGFR and SORCS2 promotes neuronal apoptosis. Promotes neuronal growth cone collapse. The sequence is that of Neurotrophic factor BDNF precursor form (BDNF) from Felis catus (Cat).